A 433-amino-acid polypeptide reads, in one-letter code: Protein translocase subunit SecY (433 aa).

The next 10 helical transmembrane spans lie at 17-37 (IVFT…PIPG), 71-91 (IFAL…LMSV), 117-137 (LTVL…ESIV), 141-161 (GPVV…TLVV), 184-204 (LIIF…MFEL), 212-232 (PLIA…IIFF), 268-288 (GVIP…LANF), 310-330 (YILL…AIVF), 366-386 (LTVI…LLMN), and 388-408 (YVIS…VVLD).

This sequence belongs to the SecY/SEC61-alpha family. Component of the Sec protein translocase complex. Heterotrimer consisting of SecY, SecE and SecG subunits. The heterotrimers can form oligomers, although 1 heterotrimer is thought to be able to translocate proteins. Interacts with the ribosome. Interacts with SecDF, and other proteins may be involved. Interacts with SecA.

The protein resides in the cell inner membrane. The central subunit of the protein translocation channel SecYEG. Consists of two halves formed by TMs 1-5 and 6-10. These two domains form a lateral gate at the front which open onto the bilayer between TMs 2 and 7, and are clamped together by SecE at the back. The channel is closed by both a pore ring composed of hydrophobic SecY resides and a short helix (helix 2A) on the extracellular side of the membrane which forms a plug. The plug probably moves laterally to allow the channel to open. The ring and the pore may move independently. This is Protein translocase subunit SecY from Rickettsia conorii (strain ATCC VR-613 / Malish 7).